The sequence spans 353 residues: uncharacterized protein (353 aa).

The Zn(2+) site is built by Cys40, His70, Cys100, Cys103, Cys106, Cys114, and Cys158.

This sequence belongs to the zinc-containing alcohol dehydrogenase family. It depends on Zn(2+) as a cofactor.

This is an uncharacterized protein from Escherichia coli (strain K12).